Reading from the N-terminus, the 141-residue chain is 6,7-dimethyl-8-ribityllumazine synthase (141 aa).

5-amino-6-(D-ribitylamino)uracil-binding positions include Phe-14, 46 to 48 (VFD), and 70 to 72 (CVI). (2S)-2-hydroxy-3-oxobutyl phosphate is bound at residue 75 to 76 (ET). His-78 functions as the Proton donor in the catalytic mechanism. Leu-103 is a binding site for 5-amino-6-(D-ribitylamino)uracil. Position 118 (Arg-118) interacts with (2S)-2-hydroxy-3-oxobutyl phosphate.

As to quaternary structure, forms an icosahedral capsid composed of 60 subunits, arranged as a dodecamer of pentamers.

The catalysed reaction is (2S)-2-hydroxy-3-oxobutyl phosphate + 5-amino-6-(D-ribitylamino)uracil = 6,7-dimethyl-8-(1-D-ribityl)lumazine + phosphate + 2 H2O + H(+). It functions in the pathway cofactor biosynthesis; riboflavin biosynthesis; riboflavin from 2-hydroxy-3-oxobutyl phosphate and 5-amino-6-(D-ribitylamino)uracil: step 1/2. Catalyzes the formation of 6,7-dimethyl-8-ribityllumazine by condensation of 5-amino-6-(D-ribitylamino)uracil with 3,4-dihydroxy-2-butanone 4-phosphate. This is the penultimate step in the biosynthesis of riboflavin. The chain is 6,7-dimethyl-8-ribityllumazine synthase (ribH) from Methanocaldococcus jannaschii (strain ATCC 43067 / DSM 2661 / JAL-1 / JCM 10045 / NBRC 100440) (Methanococcus jannaschii).